The primary structure comprises 1033 residues: Kinesin-like protein KIN-4A (1033 aa).

A Kinesin motor domain is found at 11-366 (CVKVAVHVRP…LKYANRARNI (356 aa)). Residue 89 to 96 (GQTGSGKT) participates in ATP binding. A disordered region spans residues 443-462 (QDGSPCSVESDGLKRNLRSR). Basic and acidic residues predominate over residues 453 to 462 (DGLKRNLRSR). Positions 525–638 (ALKQHFGKKI…IKQEAEQFRQ (114 aa)) form a coiled coil. The segment at 763–785 (DELDSKGPSPSRGKNGCARGSSL) is disordered. Residues 863–895 (IEIREMKEQLKELVGLLRQSELQRKEVENELKL) are a coiled coil.

Belongs to the TRAFAC class myosin-kinesin ATPase superfamily. Kinesin family. KIN-4 subfamily. Homodimer. In terms of tissue distribution, expressed in cotton fibers.

The protein localises to the cytoplasm. Its function is as follows. Kinesin-like motor protein involved in the control of the oriented deposition of cellulose microfibrils. This is Kinesin-like protein KIN-4A from Gossypium hirsutum (Upland cotton).